Here is a 308-residue protein sequence, read N- to C-terminus: Carbamate kinase (308 aa).

This sequence belongs to the carbamate kinase family.

The protein localises to the cytoplasm. The catalysed reaction is hydrogencarbonate + NH4(+) + ATP = carbamoyl phosphate + ADP + H2O + H(+). This is Carbamate kinase from Synechocystis sp. (strain ATCC 27184 / PCC 6803 / Kazusa).